The chain runs to 386 residues: Succinate--CoA ligase [ADP-forming] subunit beta (386 aa).

Positions 46, 99, 102, and 107 each coordinate ATP. Residues N199 and D213 each coordinate Mg(2+). Residues N264 and G321–M323 contribute to the substrate site.

This sequence belongs to the succinate/malate CoA ligase beta subunit family. As to quaternary structure, heterotetramer of two alpha and two beta subunits. The cofactor is Mg(2+).

It carries out the reaction succinate + ATP + CoA = succinyl-CoA + ADP + phosphate. The enzyme catalyses GTP + succinate + CoA = succinyl-CoA + GDP + phosphate. Its pathway is carbohydrate metabolism; tricarboxylic acid cycle; succinate from succinyl-CoA (ligase route): step 1/1. Its function is as follows. Succinyl-CoA synthetase functions in the citric acid cycle (TCA), coupling the hydrolysis of succinyl-CoA to the synthesis of either ATP or GTP and thus represents the only step of substrate-level phosphorylation in the TCA. The beta subunit provides nucleotide specificity of the enzyme and binds the substrate succinate, while the binding sites for coenzyme A and phosphate are found in the alpha subunit. The sequence is that of Succinate--CoA ligase [ADP-forming] subunit beta from Orientia tsutsugamushi (strain Ikeda) (Rickettsia tsutsugamushi).